A 570-amino-acid chain; its full sequence is Peptidyl-prolyl cis-trans isomerase FKBP9 (570 aa).

The N-terminal stretch at 1-24 is a signal peptide; the sequence is MAFRGWRPPPPPLLLLLLWVTGQA. PPIase FKBP-type domains follow at residues 54–142, 166–254, 278–365, and 389–477; these read GDFV…MDIW, SDFV…LDLH, GDFL…IDFH, and GDYL…LELV. N-linked (GlcNAc...) asparagine glycans are attached at residues Asn-174, Asn-286, Asn-302, and Asn-397. 2 EF-hand domains span residues 488–523 and 533–568; these read WNGE…QVAS and DAEL…AKHD. Ca(2+) is bound by residues Asp-501, Asp-503, Asn-505, Glu-507, Glu-512, Asp-546, Asn-548, Asp-550, Lys-552, and Glu-557. The Prevents secretion from ER motif lies at 567–570; sequence HDEL.

Phosphorylated.

The protein localises to the endoplasmic reticulum. It catalyses the reaction [protein]-peptidylproline (omega=180) = [protein]-peptidylproline (omega=0). Inhibited by FK506. In terms of biological role, PPIases accelerate the folding of proteins during protein synthesis. In Homo sapiens (Human), this protein is Peptidyl-prolyl cis-trans isomerase FKBP9 (FKBP9).